The chain runs to 161 residues: 4-hydroxybenzoyl-CoA reductase subunit gamma (161 aa).

A 2Fe-2S ferredoxin-type domain is found at 3 to 79 (NILRLTLNGR…GKKVETVESL (77 aa)). [2Fe-2S] cluster contacts are provided by Cys-41, Cys-46, Cys-49, Cys-61, Cys-100, Cys-103, Cys-135, and Cys-137.

In terms of assembly, heterohexamer of two alpha, two beta and two gamma subunits. It depends on [2Fe-2S] cluster as a cofactor.

It catalyses the reaction oxidized 2[4Fe-4S]-[ferredoxin] + benzoyl-CoA + H2O = 4-hydroxybenzoyl-CoA + reduced 2[4Fe-4S]-[ferredoxin] + 2 H(+). Inactivated by low concentrations of cyanide in vitro. Component of a complex that catalyzes the reductive dehydroxylation of 4-hydroxybenzoyl-CoA to benzoyl-CoA. Reaction is not reversible. Is a key enzyme in the anaerobic degradation of phenolic compounds. The polypeptide is 4-hydroxybenzoyl-CoA reductase subunit gamma (hcrC) (Thauera aromatica).